A 439-amino-acid chain; its full sequence is Trigger factor (439 aa).

The PPIase FKBP-type domain occupies Gly-163–Pro-248.

Belongs to the FKBP-type PPIase family. Tig subfamily.

The protein localises to the cytoplasm. It carries out the reaction [protein]-peptidylproline (omega=180) = [protein]-peptidylproline (omega=0). Its function is as follows. Involved in protein export. Acts as a chaperone by maintaining the newly synthesized protein in an open conformation. Functions as a peptidyl-prolyl cis-trans isomerase. This chain is Trigger factor, found in Syntrophotalea carbinolica (strain DSM 2380 / NBRC 103641 / GraBd1) (Pelobacter carbinolicus).